The sequence spans 306 residues: Acetyl-coenzyme A carboxylase carboxyl transferase subunit beta (306 aa).

In terms of domain architecture, CoA carboxyltransferase N-terminal spans 27–296 (LWHKCPSCDA…PRFVAPVIEP (270 aa)). Zn(2+) contacts are provided by C31, C34, C50, and C53. Residues 31-53 (CPSCDAVLYRPELEKTLDVCPKC) form a C4-type zinc finger.

This sequence belongs to the AccD/PCCB family. As to quaternary structure, acetyl-CoA carboxylase is a heterohexamer composed of biotin carboxyl carrier protein (AccB), biotin carboxylase (AccC) and two subunits each of ACCase subunit alpha (AccA) and ACCase subunit beta (AccD). The cofactor is Zn(2+).

The protein resides in the cytoplasm. The enzyme catalyses N(6)-carboxybiotinyl-L-lysyl-[protein] + acetyl-CoA = N(6)-biotinyl-L-lysyl-[protein] + malonyl-CoA. It functions in the pathway lipid metabolism; malonyl-CoA biosynthesis; malonyl-CoA from acetyl-CoA: step 1/1. Its function is as follows. Component of the acetyl coenzyme A carboxylase (ACC) complex. Biotin carboxylase (BC) catalyzes the carboxylation of biotin on its carrier protein (BCCP) and then the CO(2) group is transferred by the transcarboxylase to acetyl-CoA to form malonyl-CoA. The chain is Acetyl-coenzyme A carboxylase carboxyl transferase subunit beta from Pseudomonas syringae pv. tomato (strain ATCC BAA-871 / DC3000).